The primary structure comprises 146 residues: 3-hydroxyacyl-[acyl-carrier-protein] dehydratase FabZ (146 aa).

Residue His48 is part of the active site.

This sequence belongs to the thioester dehydratase family. FabZ subfamily.

It localises to the cytoplasm. It catalyses the reaction a (3R)-hydroxyacyl-[ACP] = a (2E)-enoyl-[ACP] + H2O. In terms of biological role, involved in unsaturated fatty acids biosynthesis. Catalyzes the dehydration of short chain beta-hydroxyacyl-ACPs and long chain saturated and unsaturated beta-hydroxyacyl-ACPs. In Teredinibacter turnerae (strain ATCC 39867 / T7901), this protein is 3-hydroxyacyl-[acyl-carrier-protein] dehydratase FabZ.